We begin with the raw amino-acid sequence, 92 residues long: Small ribosomal subunit protein uS19c (92 aa).

The protein belongs to the universal ribosomal protein uS19 family.

It is found in the plastid. The protein resides in the chloroplast. Functionally, protein S19 forms a complex with S13 that binds strongly to the 16S ribosomal RNA. The polypeptide is Small ribosomal subunit protein uS19c (Staurastrum punctulatum (Green alga)).